We begin with the raw amino-acid sequence, 1294 residues long: uncharacterized protein (1294 aa).

At 1-375 the chain is on the extracellular side; the sequence is MSQQENGDVA…RNFKLNFSDY (375 aa). In terms of domain architecture, ABC transporter 1 spans 28 to 287; sequence LHVRDLSIVA…FESIGYHVPQ (260 aa). Residue N41 is glycosylated (N-linked (GlcNAc...) asparagine). Residue 62–69 coordinates ATP; it reads GGSGSGKT. N-linked (GlcNAc...) asparagine glycosylation is found at N86, N101, N151, N341, N349, and N371. Residues 376–396 traverse the membrane as a helical segment; that stretch reads VTLISTFAEPLIIGTVCGWIY. Residues 397-495 are Cytoplasmic-facing; the sequence is YKPDKSSIGG…EADARKFFYQ (99 aa). Residues 496–516 form a helical membrane-spanning segment; it reads FAVVFLCQLSCSGLSMLSVAV. Over 517–530 the chain is Extracellular; it reads SRDFSKASLVGNMT. N-linked (GlcNAc...) asparagine glycosylation is present at N528. A helical transmembrane segment spans residues 531–551; it reads FTVLSMGCGFFVNAKVMPVYV. Topologically, residues 552–604 are cytoplasmic; it reads RWIKYIAFTWYSFGTLMSSTFTNSYCTTDNLDECLGNQILEVYGFPRNWITVP. A helical membrane pass occupies residues 605-625; the sequence is AVVLLCWSVGYFVVGAIILYL. At 626–1038 the chain is on the extracellular side; that stretch reads HKIDITLQNE…TTTRRSFDSL (413 aa). Residues 679 to 941 enclose the ABC transporter 2 domain; that stretch reads IKLEDIDLRV…FTELGYNCPS (263 aa). 727 to 734 contributes to the ATP binding site; sequence GPSGSGKS. N-linked (GlcNAc...) asparagine glycosylation occurs at N983. Residues 1039-1059 traverse the membrane as a helical segment; it reads MARIAQIPGLGVIFALFFAPV. Topologically, residues 1060–1120 are cytoplasmic; it reads KHNYTSISNR…PFFLAYMTLE (61 aa). Residues 1121–1141 traverse the membrane as a helical segment; that stretch reads LPLSALASVLYAVFTVLACGL. At 1142–1266 the chain is on the extracellular side; sequence PRTAGNFFAT…YGLVRNTQKY (125 aa). A helical membrane pass occupies residues 1267-1287; the sequence is LGIIVCVAIIYRLIAFFILKA. The Cytoplasmic portion of the chain corresponds to 1288–1294; sequence KLEWIKW.

This sequence belongs to the ABC transporter superfamily. ABCG family. PDR (TC 3.A.1.205) subfamily.

The protein localises to the membrane. This is an uncharacterized protein from Saccharomyces cerevisiae (strain ATCC 204508 / S288c) (Baker's yeast).